The primary structure comprises 322 residues: Ferredoxin--NADP reductase (322 aa).

FAD-binding residues include leucine 87, phenylalanine 119, aspartate 279, and threonine 320.

Belongs to the ferredoxin--NADP reductase type 2 family. Homodimer. It depends on FAD as a cofactor.

It catalyses the reaction 2 reduced [2Fe-2S]-[ferredoxin] + NADP(+) + H(+) = 2 oxidized [2Fe-2S]-[ferredoxin] + NADPH. The polypeptide is Ferredoxin--NADP reductase (Streptococcus suis (strain 98HAH33)).